The following is a 266-amino-acid chain: MRLIPLHNATDVGLWSARHIVKRINAFKPTAERPFVLGLPTGSTPLQTYKRLIEIYQAGEVSFRHVVTFNMDEYVGLAESHPESYHSFMYNNFFNHIDIHKENINLLNGNAPDVDAECRRYEEKISSYGKINLFMGGVGNDGHIAFNEPASSLASRTRIKTLTEDTRIANSRFFNGDISLVPKYALTVGVGTLLDAEEVMILVTGHAKSLALQAAVEGSVNHMWTISALQLHPKSVVVCDQPATMELKVKTVNYFRELEAENMKDL.

The active-site Proton acceptor; for enolization step is Asp-72. Asp-141 acts as the For ring-opening step in catalysis. His-143 acts as the Proton acceptor; for ring-opening step in catalysis. The active-site For ring-opening step is the Glu-148.

It belongs to the glucosamine/galactosamine-6-phosphate isomerase family. NagB subfamily. In terms of assembly, homohexamer.

It catalyses the reaction alpha-D-glucosamine 6-phosphate + H2O = beta-D-fructose 6-phosphate + NH4(+). It functions in the pathway amino-sugar metabolism; N-acetylneuraminate degradation; D-fructose 6-phosphate from N-acetylneuraminate: step 5/5. Its activity is regulated as follows. Allosterically activated by N-acetylglucosamine 6-phosphate (GlcNAc6P). In terms of biological role, catalyzes the reversible isomerization-deamination of glucosamine 6-phosphate (GlcN6P) to form fructose 6-phosphate (Fru6P) and ammonium ion. In Edwardsiella ictaluri (strain 93-146), this protein is Glucosamine-6-phosphate deaminase.